We begin with the raw amino-acid sequence, 440 residues long: tRNA-2-methylthio-N(6)-dimethylallyladenosine synthase (440 aa).

The region spanning 2–118 is the MTTase N-terminal domain; it reads PKYYIITYGC…LPKILESLDG (117 aa). The [4Fe-4S] cluster site is built by cysteine 11, cysteine 47, cysteine 81, cysteine 155, cysteine 159, and cysteine 162. Residues 141 to 370 form the Radical SAM core domain; that stretch reads RENKFQAWIP…ENLQRKIIYE (230 aa). The 64-residue stretch at 373-436 folds into the TRAM domain; sequence LSRVGKEEIV…LWSLKGEVIR (64 aa).

This sequence belongs to the methylthiotransferase family. MiaB subfamily. Monomer. The cofactor is [4Fe-4S] cluster.

The protein resides in the cytoplasm. The enzyme catalyses N(6)-dimethylallyladenosine(37) in tRNA + (sulfur carrier)-SH + AH2 + 2 S-adenosyl-L-methionine = 2-methylsulfanyl-N(6)-dimethylallyladenosine(37) in tRNA + (sulfur carrier)-H + 5'-deoxyadenosine + L-methionine + A + S-adenosyl-L-homocysteine + 2 H(+). In terms of biological role, catalyzes the methylthiolation of N6-(dimethylallyl)adenosine (i(6)A), leading to the formation of 2-methylthio-N6-(dimethylallyl)adenosine (ms(2)i(6)A) at position 37 in tRNAs that read codons beginning with uridine. The sequence is that of tRNA-2-methylthio-N(6)-dimethylallyladenosine synthase from Dictyoglomus thermophilum (strain ATCC 35947 / DSM 3960 / H-6-12).